Here is a 209-residue protein sequence, read N- to C-terminus: uncharacterized protein (209 aa).

Residues 1–17 form the signal peptide; that stretch reads MKRLVTGLLALSLFLAA. A disordered region spans residues 17–105; sequence ACGQDSDQQK…SNNQANNNQK (89 aa). A lipid anchor (N-palmitoyl cysteine) is attached at C18. Residue C18 is the site of S-diacylglycerol cysteine attachment. Positions 23-70 are enriched in basic and acidic residues; it reads DQQKDGNKEKDDKAKTEQQDKKTNDSSKDKKDNKDDSKDVNKDNKDNS. A compositionally biased stretch (low complexity) spans 71 to 105; that stretch reads ANDNQQQSNSNATNNDQNQTNNNQSSNNQANNNQK.

Its subcellular location is the cell membrane. This is an uncharacterized protein from Staphylococcus aureus (strain COL).